Consider the following 255-residue polypeptide: ATP synthase subunit b 1 (255 aa).

A helical membrane pass occupies residues 5–22 (WITVAAQIVNFLLLIWLL).

This sequence belongs to the ATPase B chain family. As to quaternary structure, F-type ATPases have 2 components, F(1) - the catalytic core - and F(0) - the membrane proton channel. F(1) has five subunits: alpha(3), beta(3), gamma(1), delta(1), epsilon(1). F(0) has three main subunits: a(1), b(2) and c(10-14). The alpha and beta chains form an alternating ring which encloses part of the gamma chain. F(1) is attached to F(0) by a central stalk formed by the gamma and epsilon chains, while a peripheral stalk is formed by the delta and b chains.

It is found in the cell inner membrane. In terms of biological role, f(1)F(0) ATP synthase produces ATP from ADP in the presence of a proton or sodium gradient. F-type ATPases consist of two structural domains, F(1) containing the extramembraneous catalytic core and F(0) containing the membrane proton channel, linked together by a central stalk and a peripheral stalk. During catalysis, ATP synthesis in the catalytic domain of F(1) is coupled via a rotary mechanism of the central stalk subunits to proton translocation. Component of the F(0) channel, it forms part of the peripheral stalk, linking F(1) to F(0). The polypeptide is ATP synthase subunit b 1 (Dinoroseobacter shibae (strain DSM 16493 / NCIMB 14021 / DFL 12)).